Here is a 382-residue protein sequence, read N- to C-terminus: Inactive anthranilate O-methyltransferase 1 (382 aa).

S-adenosyl-L-homocysteine contacts are provided by Tyr20, Cys61, Asn66, Asp102, Leu103, Ser146, and Tyr147. Residues Glu268 and Phe270 each contribute to the Mg(2+) site.

Belongs to the methyltransferase superfamily. Type-7 methyltransferase family. SABATH subfamily.

The polypeptide is Inactive anthranilate O-methyltransferase 1 (AAMT1I) (Zea mays (Maize)).